A 435-amino-acid chain; its full sequence is Serine--tRNA ligase (435 aa).

L-serine is bound at residue 242–244 (TAE). 273–275 (RSE) lines the ATP pocket. An L-serine-binding site is contributed by glutamate 296. 360–363 (EISS) contributes to the ATP binding site. Serine 396 contributes to the L-serine binding site.

This sequence belongs to the class-II aminoacyl-tRNA synthetase family. Type-1 seryl-tRNA synthetase subfamily. Homodimer. The tRNA molecule binds across the dimer.

The protein localises to the cytoplasm. The catalysed reaction is tRNA(Ser) + L-serine + ATP = L-seryl-tRNA(Ser) + AMP + diphosphate + H(+). It carries out the reaction tRNA(Sec) + L-serine + ATP = L-seryl-tRNA(Sec) + AMP + diphosphate + H(+). It participates in aminoacyl-tRNA biosynthesis; selenocysteinyl-tRNA(Sec) biosynthesis; L-seryl-tRNA(Sec) from L-serine and tRNA(Sec): step 1/1. Functionally, catalyzes the attachment of serine to tRNA(Ser). Is also able to aminoacylate tRNA(Sec) with serine, to form the misacylated tRNA L-seryl-tRNA(Sec), which will be further converted into selenocysteinyl-tRNA(Sec). The polypeptide is Serine--tRNA ligase (Vibrio campbellii (strain ATCC BAA-1116)).